A 398-amino-acid polypeptide reads, in one-letter code: Phosphoglycerate kinase (398 aa).

Substrate-binding positions include 21–23, Arg36, 59–62, Arg119, and Arg157; these read DFN and HLGR. Residues Lys208, Gly296, Glu327, and 354-357 contribute to the ATP site; that span reads GGDS.

This sequence belongs to the phosphoglycerate kinase family. Monomer.

It is found in the cytoplasm. The catalysed reaction is (2R)-3-phosphoglycerate + ATP = (2R)-3-phospho-glyceroyl phosphate + ADP. It functions in the pathway carbohydrate degradation; glycolysis; pyruvate from D-glyceraldehyde 3-phosphate: step 2/5. The polypeptide is Phosphoglycerate kinase (Streptococcus agalactiae serotype III (strain NEM316)).